Reading from the N-terminus, the 453-residue chain is tRNA modification GTPase MnmE (453 aa).

Positions 22, 79, and 119 each coordinate (6S)-5-formyl-5,6,7,8-tetrahydrofolate. One can recognise a TrmE-type G domain in the interval 215–376 (GMKVVIAGRP…LKLHLKSLMG (162 aa)). K(+) is bound at residue Asn225. Residues 225–230 (NAGKSS), 244–250 (TEIAGTT), 269–272 (DTAG), and 334–337 (NKAD) contribute to the GTP site. Ser229 contacts Mg(2+). Residues Thr244, Ile246, and Thr249 each coordinate K(+). Thr250 contacts Mg(2+). Lys453 is a (6S)-5-formyl-5,6,7,8-tetrahydrofolate binding site.

The protein belongs to the TRAFAC class TrmE-Era-EngA-EngB-Septin-like GTPase superfamily. TrmE GTPase family. As to quaternary structure, homodimer. Heterotetramer of two MnmE and two MnmG subunits. Requires K(+) as cofactor.

It localises to the cytoplasm. Its function is as follows. Exhibits a very high intrinsic GTPase hydrolysis rate. Involved in the addition of a carboxymethylaminomethyl (cmnm) group at the wobble position (U34) of certain tRNAs, forming tRNA-cmnm(5)s(2)U34. The sequence is that of tRNA modification GTPase MnmE from Shewanella putrefaciens (strain CN-32 / ATCC BAA-453).